Consider the following 221-residue polypeptide: Chaperone protein TorD (221 aa).

Belongs to the TorD/DmsD family. TorD subfamily.

It localises to the cytoplasm. Functionally, involved in the biogenesis of TorA. Acts on TorA before the insertion of the molybdenum cofactor and, as a result, probably favors a conformation of the apoenzyme that is competent for acquiring the cofactor. In Psychrobacter sp. (strain PRwf-1), this protein is Chaperone protein TorD.